A 167-amino-acid polypeptide reads, in one-letter code: MDQAKLARMQASVRIGNPPSGPRANRNRGKGTPRRKVKKVHKSSGADDKKLQATLKKMNVQPIPAVEEVNMFKEDGNVIHFGNPRVHASVPSNTFALYGNGEEKELTELVPGILNQLGPDSLASLRKLAESYQNMQKNQAGAEGKKDDEEDDIPDLVEGQDFESKVE.

Disordered regions lie at residues 1-48 (MDQA…GADD) and 133-167 (QNMQKNQAGAEGKKDDEEDDIPDLVEGQDFESKVE). Residues 25–42 (NRNRGKGTPRRKVKKVHK) show a composition bias toward basic residues. Residues 45–110 (GADDKKLQAT…GEEKELTELV (66 aa)) enclose the NAC-A/B domain. The segment covering 148-161 (DEEDDIPDLVEGQD) has biased composition (acidic residues).

It belongs to the NAC-beta family. As to quaternary structure, part of the nascent polypeptide-associated complex (NAC), consisting of egd2 and egd1. NAC associates with ribosomes via egd1.

It localises to the cytoplasm. Its subcellular location is the nucleus. Its function is as follows. Component of the nascent polypeptide-associated complex (NAC), a dynamic component of the ribosomal exit tunnel, protecting the emerging polypeptides from interaction with other cytoplasmic proteins to ensure appropriate nascent protein targeting. The NAC complex also promotes mitochondrial protein import by enhancing productive ribosome interactions with the outer mitochondrial membrane and blocks the inappropriate interaction of ribosomes translating non-secretory nascent polypeptides with translocation sites in the membrane of the endoplasmic reticulum. EGD1 may act as a transcription factor that exert a negative effect on the expression of several genes that are transcribed by RNA polymerase II. The protein is Nascent polypeptide-associated complex subunit beta (egd1) of Aspergillus terreus (strain NIH 2624 / FGSC A1156).